The sequence spans 557 residues: DNA 3'-5' helicase XPB (557 aa).

Positions 1-135 (MTDGPLIVQS…APLLGTRIAP (135 aa)) are required for protein stability or solubility. One can recognise a Helicase ATP-binding domain in the interval 190-344 (VDNFWNGGSG…DVFSLIGPKR (155 aa)). Residue 203 to 210 (LPCGAGKT) participates in ATP binding. Residues 298 to 301 (DEVH) carry the DEAH box motif. Residues 398–544 (RVVEKLVAQH…AYRIVDADDI (147 aa)) enclose the Helicase C-terminal domain.

The protein belongs to the helicase family. RAD25/XPB subfamily. In terms of assembly, monomer. The cofactor is Mn(2+). Mg(2+) is required as a cofactor. It depends on Ca(2+) as a cofactor.

The catalysed reaction is Couples ATP hydrolysis with the unwinding of duplex DNA by translocating in the 3'-5' direction.. The enzyme catalyses ATP + H2O = ADP + phosphate + H(+). In terms of biological role, ATP-dependent 3'-5' DNA helicase, unwinds 3'-overhangs, 3'- flaps, and splayed-arm DNA substrates but not 5'-overhangs or 5'-flap substrates. Requires ATP hydrolysis for activity; the ATPase activity is DNA-dependent and requires a minimum of 4 single-stranded nucleotides (nt) with 6-10 nt providing all necessary interactions for full processive unwinding. The ATPase prefers ATP over CTP or GTP, is almost inactive with TTP. This chain is DNA 3'-5' helicase XPB, found in Kineococcus radiotolerans (strain ATCC BAA-149 / DSM 14245 / SRS30216).